Consider the following 90-residue polypeptide: UPF0237 protein MJ1558 (90 aa).

In terms of domain architecture, ACT spans 5–79 (VVSVIGQDRT…EELGVQVIVQ (75 aa)).

The protein belongs to the UPF0237 family.

The chain is UPF0237 protein MJ1558 from Methanocaldococcus jannaschii (strain ATCC 43067 / DSM 2661 / JAL-1 / JCM 10045 / NBRC 100440) (Methanococcus jannaschii).